Reading from the N-terminus, the 3616-residue chain is MQSGFDRCLCTPNARVFWEHGQVYCTRCLAARPLLPLSQQNPRLGALGLFYRPATPLTWEAPITYPTKECRPGGLCWLSGIYPIARMTSGNHNFQARLNFVASVVYRDGKLTSKHLEEEFEVYSRGCRWYPITGPVPGIALYANAVHVSDEPFPGCTHVLSNLPLPQQPLRKGLCPFSDARAEVWRYKGNTIFVSEQGYLWTTGSNDSVPEPWGEARRLCEKIIASLPADHLVKIEFSNYPFDYSFTGGDGAGYVLFPCKKNDTKFSKCWEKVFEDHSSWKVACEEADLADRMGYRTPAGVAGPYLARRLQYRGLRAVVKPEQNDYVVWALGVPESYIRHISRAGEPVENFFVRVGEFSIVSNCVATPYPKFRFQTRKYYGYSPPGDGACGLHCISAIINDIFGDALCTKLTNCSRDSSEWLSDQDMYQLVMTARLPATLGHCPSATYKLDCVNQHWTVTKRKGDRALGGLSPECVRGVCGGECKFVPTYPREINLELAAKSPISALAFSLGVEPYCDCWNFTNSVLVNDSLAVETARAGEAYRSAMGIPKDDWVLLAELMTENCLTRREVLDKLQRGLRLHATSKPGSPASVSPASSIDFSAAGLLLDGTESDKEAVVAVNNDCYTVLGFDKNSATKSEQELATGLFSELVEPMETSTSKHESRKILEAASRALKSAKPKRKRNKKKKTSSPTPTPPETPTREVPGAIEVVSGDEEAGACESATIVPDKAQARPPPRPKRQALKKAEQGFILKDIIWNPTESGVKCLTIVEDVRAFLKSITPPGGALGTRARITAHIVEQFHVIRESTPELVLAHAEHQAKNMHELLLSEKAKLILGIGEDTLKKLVSSQRSLPRSIGFGAWLSDQQKTADSCGEREFVEVPLKSGAEPTPSKRDLGVSLGDQLSQDGAPRLSSSTACEIKERVPPIKDSGGGLGQKFMAWLNHQVFLLSSHLLAMWSVVLGSRQKLNWADYVYTLFCLCCVLLCFHFPAIGFIPLAGCVFGSPWRVRLSVFSVWLCVAVVVFQEVLPEPGSVCSSASAECAAALERYSGNGVHRPVNHIGVGLVGTVAGFVARVVGGPRHYWFYFLRLMVVLDLGLVFLAVALRGRCKKCFCKCVRVAPHEVHLRVFPLTKVARPTLEAVCDMYSAPRVDPILVATGIKGCWQGKVSPHQVTDKPVSYSNLEEKKISNKTVVPPPTDPQQAVKCLKVLQCGGSIQDVGVPEVKKVSKVPYKAPFFPNVSIDPECYIVVDPVTYSAAMRGGYGVSHLIVGTGDFAEVNGLRFVSGGHVADFVCLGLYVMLNFLISAWLSSPVSCGRGTNDPWCKNPFSYPVVGQGVMCNSHLCISEDGLTSPMVLSYSLIDWALMIAVIATVAIFIAKVSLLVDVICVFLCLLMYVFPPLSVIAFAFPFALCKVHLHPVTLVWVQFFLLAVNFWAGVAVAVILISSWFLARATSSTGLVTPYDVHLVTSTPRGASSLASAPEGTYLAAVRRSALTGRCCMFVPTNFGSVLEGSLRTRGCAKNVVSVFGSASGSGGVFTIHGNPVVVTATHLLSDGKARVSCVGFSQCLTFKSVGDYAFARVAEWKGDAPKVELSDRRGRAYCSPQVEWSLVLLGPNTAFCFTKCGDSGSPVVDEDGNLIGVHTGSNKRGSGMITTHNGKTLGMSNVKLSEMCQHYGGSGVPVSTVRLPKHLIVDVEAVASDLVAVVESLPTPEGALSSVQLLCVFFFLWRLIHVPFVPVIAVAFFFLNEILPVVLARLMFSFALSLFSVFTGFSVQVLLLRLVIAALNRSAVSFGSFLLGQLFHCCLMPSHLETLGPVPGYFYPSTTEVASKEIFVTLLAIHVLALLLSLFKRPMLADVLVGNGSFDAAFFLKYFAEGNLRDGVSDSCNMTPEGLTAALAITLSDDDLEFLQRHSEFKCFVSASNMRNGAKEFIESAYARALRAQLAATDKIKASKSILAKLESFAGGVVTKVEPGDVVVVLGKKIVGDLVEITINDVKHVIRVIETRVMAGTQFSVGTICGDLENACEDPSGLVKTSKKQRRRQKRTGLGTEVVGTVEIDGVSYNKVWHKATGDVTYEGFLVSENSRLRTLGTSAIGRFQEFIRKHGSKVKTSVEKYPVGKNKHIEFAVTTYNLDGEEFDVPDHEPLEWTITIGDSDLEAERLTVDQALRHMGHDSLLTPKEKEKLARIIESLNGLQQSSALNCLTTSGLERCSRGGVTVSKDAVKIVKYHSRTFSIGDVNLKVMSFDEYRRTMGKPGHLLVAKLTDGVVVMRKHEPSLVDVILTGEDAEFFPRTHGPGNTGIHRFVWDFESPPVDLELELSEQIITACSMRRGDAPALDLPYKLHPVRGDPYRHRGVLFNTRFGDITYLIPEKTKEPLHAAACYNKGVPVSDSETLVATTLPHGFELYVPTLPPSVLEYLDSRPDTPRMLTKHGCASAAEKDLQKFDLSRQGFVLPGVLYMVRRYLSRLIGVRRRLFMPSTYPAKNSMAGINGGRFPLTWLQSHPDIDALCKRACEEHWQTVTPCTLKKQYCSKSKTRTILGTNNFVALGLRSALSGVTQGFMRKGIGTPICLGKNKFTPLPVRIGGRCLEADLASCDRSTPAIIRWFTTNLLFELAGAEEWIPSYVLNCCHDVVSTMSGCFDKRGGLSSGDPVTSISNTVYSLIIYAQHMVLSAFRCGHKIGGLFLQDSLEMEQLFELQPLLVYSDDVVFYNESDELPNYHFFVDHLDLMLGFKTDRSKTVITSEPKLPGCRISGGRVLVPQRDRIVAALAYQMKASCVGEYFASAAAILMDACACCDHDESWYFDLVCGIAECAGSPWFRFPGPSFFLDMWNRLSAEEKKKCRTCAHCGAPATLVSSCGLNLCDYHGHGHPHCPVVLPCGHAVGSGVCEQCSSSAMNLNTELDILLMCVPYHPPKVELLSVNDKVSSLPPGAYQARGGVVSVRRDILGNVVDLPDGDYQVMKVAQTCADISMVSVNSNILRSQFVTGAPGTGKTTYLLSVVRDDDVIYTPTHRTMLDVVKALKVCRFDPPKDTPLEFPVPGRTGPTVRLIGAGFVPGRVSYLDEAAYCNPLDVLKVLSKTPLVCVGDLNQLPPVGFNGPCFAFSLMPGRQLIEVFRFGPAVVNSIKKFYKEELVPRGPDTGVKFLKQYQPYGQVLTPYHRDRVDGAITIDSSQGCTYDVVTVYLPTPKSLNSARALVALTRARHYVFIYDPYDQLQQYLQVFEHEPADAWAFWCGDQPKMIVGGVVKQLAGHSRTTDLKLQQLMGLEGTASPLPQVGHNLGFYYSPDLIQFAKIPPELCKHWPVVTAQNRTEWPDRLVCGMNKMDKNSRAVFCAGYYVGPSIFLGVPGVVSYYLTKYLKGESVPLPDSIMSTGRIRLNVREYLDENEIEFAKKCPQPFIGEVKGSNVGGCHHVTSRFLPPVLVPGSVVKVGVSCPGKAAKGLCTVTDVYLPELDSYLHPPSKSMDYKLLVDFQPVKLMVWKDATAYFHEGIRPMEAMSRFLKVPEGEGVFFDLDEFVTNAKVSKLPCKYSVSAHQFLTEVVLSMTPTSEAPPDYELLFARAYCVPGLDVGTLNAYIYKRGPSTYTTSNFARLVKDTAVPVGCKGSGYMFPK.

The C4-type; atypical zinc finger occupies 8 to 28 (CLCTPNARVFWEHGQVYCTRC). The Peptidase C31 domain maps to 69-181 (ECRPGGLCWL…KGLCPFSDAR (113 aa)). Active-site for Nsp1-alpha papain-like cysteine proteinase activity residues include cysteine 76 and histidine 147. Residues 262–381 (NDTKFSKCWE…FRFQTRKYYG (120 aa)) enclose the Peptidase C32 domain. Residues cysteine 269 and histidine 340 each act as for Nsp1-beta papain-like cysteine proteinase activity in the active site. Positions 381 to 486 (GYSPPGDGAC…RGVCGGECKF (106 aa)) constitute a Peptidase C33 domain. Catalysis depends on for Nsp2 cysteine proteinase activity residues cysteine 390 and histidine 456. 2 disordered regions span residues 672–706 (SRAL…REVP) and 883–912 (PLKS…GAPR). Residues 676–690 (KSAKPKRKRNKKKKT) show a composition bias toward basic residues. Over residues 903–912 (DQLSQDGAPR) the composition is skewed to polar residues. Helical transmembrane passes span 942-962 (WLNH…SVVL), 977-997 (LFCL…FIPL), 1010-1030 (LSVF…VLPE), 1060-1080 (HIGV…VGGP), 1085-1105 (FYFL…AVAL), 1289-1309 (VADF…SAWL), 1364-1384 (ALMI…SLLV), 1386-1406 (VICV…VIAF), and 1425-1445 (VQFF…VILI). Residues 981–1105 (CCVLLCFHFP…LGLVFLAVAL (125 aa)) form an HD1 region. Positions 1289 to 1448 (VADFVCLGLY…AVAVILISSW (160 aa)) are HD2. A Peptidase S32 domain is found at 1513–1714 (GSLRTRGCAK…AVVESLPTPE (202 aa)). Residues histidine 1551, aspartate 1576, and serine 1628 each act as charge relay system; for 3C-like serine proteinase activity in the active site. Transmembrane regions (helical) follow at residues 1715 to 1735 (GALS…LIHV), 1737 to 1757 (FVPV…VVLA), 1761 to 1781 (FSFA…VLLL), and 1832 to 1852 (SKEI…LSLF). Residues 1737-1852 (FVPVIAVAFF…HVLALLLSLF (116 aa)) are HD3. Positions 2194 to 2352 (SLNGLQQSSA…LPYKLHPVRG (159 aa)) constitute a NiRAN domain. The 135-residue stretch at 2590–2724 (GRCLEADLAS…YNESDELPNY (135 aa)) folds into the RdRp catalytic domain. In terms of domain architecture, AV ZBD spans 2844–2907 (KKKCRTCAHC…SSAMNLNTEL (64 aa)). Zn(2+)-binding residues include cysteine 2850, cysteine 2853, cysteine 2863, cysteine 2868, histidine 2871, histidine 2873, histidine 2875, histidine 2877, cysteine 2884, histidine 2886, cysteine 2893, and cysteine 2896. The (+)RNA virus helicase ATP-binding domain maps to 2964-3116 (QVMKVAQTCA…AFSLMPGRQL (153 aa)). 2992–2999 (GAPGTGKT) provides a ligand contact to ATP. Residues 3117–3248 (IEVFRFGPAV…CGDQPKMIVG (132 aa)) form the (+)RNA virus helicase C-terminal domain. The AV-Nsp11N/CoV-Nsp15M domain occupies 3272–3368 (EGTASPLPQV…LTKYLKGESV (97 aa)). Positions 3370 to 3492 (LPDSIMSTGR…MVWKDATAYF (123 aa)) constitute a NendoU domain.

The protein belongs to the arteriviridae polyprotein family. In terms of processing, specific enzymatic cleavages in vivo by its own proteases yield mature proteins. There are two alternative pathways for processing. Either nsp4-5 is cleaved, which represents the major pathway or the nsp5-6 and nsp6-7 are processed, which represents the minor pathway. The major pathway occurs when nsp2 acts as a cofactor for nsp4.

The protein resides in the host membrane. It is found in the host cytoplasm. It localises to the host perinuclear region. It catalyses the reaction RNA(n) + a ribonucleoside 5'-triphosphate = RNA(n+1) + diphosphate. It carries out the reaction ATP + H2O = ADP + phosphate + H(+). The catalysed reaction is uridylyl-uridylyl-ribonucleotide-RNA = a 3'-end uridylyl-2',3'-cyclophospho-uridine-RNA + a 5'-end dephospho-ribonucleoside-RNA. The replicase polyprotein 1ab is a multifunctional protein: it contains the activities necessary for the transcription of negative stranded RNA, leader RNA, subgenomic mRNAs and progeny virion RNA as well as proteinases responsible for the cleavage of the polyprotein into functional products. In terms of biological role, the Nsp1 chain is essential for viral subgenomic mRNA synthesis. Its function is as follows. The 3C-like serine proteinase chain is responsible for the majority of cleavages as it cleaves the C-terminus of the polyprotein. Functionally, the helicase chain, which contains a zinc finger structure, displays RNA and DNA duplex-unwinding activities with 5' to 3' polarity. Plays a role in viral transcription/replication and prevents the simultaneous activation of host cell dsRNA sensors, such as MDA5/IFIH1, OAS, and PKR. Acts by degrading the 5'-polyuridines generated during replication of the poly(A) region of viral genomic and subgenomic RNAs. Catalyzes a two-step reaction in which a 2'3'-cyclic phosphate (2'3'-cP) is first generated by 2'-O transesterification, which is then hydrolyzed to a 3'-phosphate (3'-P). If not degraded, poly(U) RNA would hybridize with poly(A) RNA tails and activate host dsRNA sensors. This Mus musculus domesticus (western European house mouse) protein is Replicase polyprotein 1ab (rep).